We begin with the raw amino-acid sequence, 141 residues long: Small ribosomal subunit protein uS12 (141 aa).

3-methylthioaspartic acid is present on Asp-89. The tract at residues 104 to 141 (ASGAVGPSNTNKLNRNVSRSKYGVKRPKAGAKPASKAK) is disordered. A compositionally biased stretch (polar residues) spans 110–122 (PSNTNKLNRNVSR). Over residues 125-141 (YGVKRPKAGAKPASKAK) the composition is skewed to basic residues.

The protein belongs to the universal ribosomal protein uS12 family. Part of the 30S ribosomal subunit. Contacts proteins S8 and S17. May interact with IF1 in the 30S initiation complex.

Functionally, with S4 and S5 plays an important role in translational accuracy. Its function is as follows. Interacts with and stabilizes bases of the 16S rRNA that are involved in tRNA selection in the A site and with the mRNA backbone. Located at the interface of the 30S and 50S subunits, it traverses the body of the 30S subunit contacting proteins on the other side and probably holding the rRNA structure together. The combined cluster of proteins S8, S12 and S17 appears to hold together the shoulder and platform of the 30S subunit. The polypeptide is Small ribosomal subunit protein uS12 (Methylacidiphilum infernorum (isolate V4) (Methylokorus infernorum (strain V4))).